Reading from the N-terminus, the 103-residue chain is RNA-binding protein YlxQ (103 aa).

Belongs to the eukaryotic ribosomal protein eL8 family.

In terms of biological role, RNA-binding protein that recognizes the K-turn motif present in ribosomal RNA, but also in box C/D and box C'/D' sRNAs. This is RNA-binding protein YlxQ from Enterococcus faecium (Streptococcus faecium).